The primary structure comprises 230 residues: Thymidylate kinase (230 aa).

20 to 27 (GGEGAGKS) is a binding site for ATP.

It belongs to the thymidylate kinase family.

The enzyme catalyses dTMP + ATP = dTDP + ADP. In terms of biological role, phosphorylation of dTMP to form dTDP in both de novo and salvage pathways of dTTP synthesis. This is Thymidylate kinase from Rhodopseudomonas palustris (strain TIE-1).